The following is a 384-amino-acid chain: 1-deoxy-D-xylulose 5-phosphate reductoisomerase (384 aa).

NADPH contacts are provided by Thr11, Gly12, Ser13, Ile14, Lys38, and Asn123. Position 124 (Lys124) interacts with 1-deoxy-D-xylulose 5-phosphate. NADPH is bound at residue Glu125. Position 148 (Asp148) interacts with Mn(2+). 1-deoxy-D-xylulose 5-phosphate contacts are provided by Ser149, Glu150, Ser174, and His197. Glu150 serves as a coordination point for Mn(2+). Gly203 lines the NADPH pocket. Residues Ser210, Asn215, Lys216, and Glu219 each contribute to the 1-deoxy-D-xylulose 5-phosphate site. A Mn(2+)-binding site is contributed by Glu219.

The protein belongs to the DXR family. Requires Mg(2+) as cofactor. It depends on Mn(2+) as a cofactor.

The catalysed reaction is 2-C-methyl-D-erythritol 4-phosphate + NADP(+) = 1-deoxy-D-xylulose 5-phosphate + NADPH + H(+). It functions in the pathway isoprenoid biosynthesis; isopentenyl diphosphate biosynthesis via DXP pathway; isopentenyl diphosphate from 1-deoxy-D-xylulose 5-phosphate: step 1/6. In terms of biological role, catalyzes the NADPH-dependent rearrangement and reduction of 1-deoxy-D-xylulose-5-phosphate (DXP) to 2-C-methyl-D-erythritol 4-phosphate (MEP). This is 1-deoxy-D-xylulose 5-phosphate reductoisomerase from Halothermothrix orenii (strain H 168 / OCM 544 / DSM 9562).